The following is an 83-amino-acid chain: Cytochrome b559 subunit alpha (83 aa).

A helical transmembrane segment spans residues 21–35 (IIHSITIPSLFIAGW). His-23 contacts heme.

It belongs to the PsbE/PsbF family. As to quaternary structure, heterodimer of an alpha subunit and a beta subunit. PSII is composed of 1 copy each of membrane proteins PsbA, PsbB, PsbC, PsbD, PsbE, PsbF, PsbH, PsbI, PsbJ, PsbK, PsbL, PsbM, PsbT, PsbX, PsbY, PsbZ, Psb30/Ycf12, at least 3 peripheral proteins of the oxygen-evolving complex and a large number of cofactors. It forms dimeric complexes. Heme b serves as cofactor.

It is found in the plastid. It localises to the chloroplast thylakoid membrane. Its function is as follows. This b-type cytochrome is tightly associated with the reaction center of photosystem II (PSII). PSII is a light-driven water:plastoquinone oxidoreductase that uses light energy to abstract electrons from H(2)O, generating O(2) and a proton gradient subsequently used for ATP formation. It consists of a core antenna complex that captures photons, and an electron transfer chain that converts photonic excitation into a charge separation. The sequence is that of Cytochrome b559 subunit alpha from Lotus japonicus (Lotus corniculatus var. japonicus).